Reading from the N-terminus, the 322-residue chain is tRNA U34 carboxymethyltransferase (322 aa).

Residues Lys-91, Trp-105, Lys-110, Gly-129, 179–180 (LE), Met-195, Tyr-199, and Arg-314 each bind carboxy-S-adenosyl-L-methionine.

This sequence belongs to the class I-like SAM-binding methyltransferase superfamily. CmoB family. As to quaternary structure, homotetramer.

It catalyses the reaction carboxy-S-adenosyl-L-methionine + 5-hydroxyuridine(34) in tRNA = 5-carboxymethoxyuridine(34) in tRNA + S-adenosyl-L-homocysteine + H(+). Catalyzes carboxymethyl transfer from carboxy-S-adenosyl-L-methionine (Cx-SAM) to 5-hydroxyuridine (ho5U) to form 5-carboxymethoxyuridine (cmo5U) at position 34 in tRNAs. The polypeptide is tRNA U34 carboxymethyltransferase (Pseudomonas paraeruginosa (strain DSM 24068 / PA7) (Pseudomonas aeruginosa (strain PA7))).